The sequence spans 63 residues: Cysteine-rich venom protein 3 (63 aa).

Residues 1–25 form the signal peptide; it reads MRKPITLILVVALALVLLATSEVSA. 3 cysteine pairs are disulfide-bonded: cysteine 29-cysteine 43, cysteine 36-cysteine 48, and cysteine 42-cysteine 58.

In terms of tissue distribution, expressed by the venom gland.

It is found in the secreted. The sequence is that of Cysteine-rich venom protein 3 from Pimpla hypochondriaca (Parasitoid wasp).